The chain runs to 596 residues: Estrogen receptor (596 aa).

The interval 1 to 185 (MTMTLHTKAS…AMESAKETRY (185 aa)) is modulating (transactivation AF-1); mediates interaction with MACROD1. O-linked (GlcNAc) serine glycosylation is present at Ser-10. Positions 36-48 (ERPLGEVYMDSSK) are required for interaction with NCOA1. The interval 36–175 (ERPLGEVYMD…LASTSDKGSM (140 aa)) is interaction with DDX5; self-association. 2 positions are modified to phosphoserine; by CDK2: Ser-104 and Ser-106. Ser-119 carries the phosphoserine modification. The disordered stretch occupies residues 144–175 (EAGPPAYYRPNSDNRRQGGRERLASTSDKGSM). Over residues 155–166 (SDNRRQGGRERL) the composition is skewed to basic and acidic residues. Position 168 is a phosphoserine; by CK2 (Ser-168). NR C4-type zinc fingers lie at residues 186-206 (CAVCNDYASGYHYGVWSCEGC) and 222-246 (CPATNQCTIDKNRRKSCQACRLRKC). Positions 186-251 (CAVCNDYASG…RLRKCYEVGM (66 aa)) form a DNA-binding region, nuclear receptor. A mediates interaction with DNTTIP2 region spans residues 186-311 (CAVCNDYASG…TKKNSPVLSL (126 aa)). The hinge stretch occupies residues 252-311 (MKGGIRKDRRGGRMLKHKRQRDDGEGRNEAVPSGDMRAANLWPSPIMIKHTKKNSPVLSL). Basic residues predominate over residues 259 to 270 (DRRGGRMLKHKR). Positions 259 to 285 (DRRGGRMLKHKRQRDDGEGRNEAVPSG) are disordered. An Asymmetric dimethylarginine; by PRMT1 modification is found at Arg-261. The interval 263-596 (GRMLKHKRQR…GEAENFPSTV (334 aa)) is interaction with AKAP13. The segment at 265–595 (MLKHKRQRDD…TGEAENFPST (331 aa)) is self-association. The NR LBD domain maps to 312–548 (TADQMISALL…DLLLEMLDAH (237 aa)). Residues 312 to 595 (TADQMISALL…TGEAENFPST (284 aa)) form a transactivation AF-2 region. 17beta-estradiol-binding residues include Glu-354 and Arg-395. Cys-448 carries S-palmitoyl cysteine lipidation. Residue His-525 coordinates 17beta-estradiol. Tyr-538 carries the phosphotyrosine; by Tyr-kinases modification. O-linked (GlcNAc) threonine glycosylation occurs at Thr-572.

This sequence belongs to the nuclear hormone receptor family. NR3 subfamily. As to quaternary structure, binds DNA as a homodimer. Can form a heterodimer with ESR2. Interacts with coactivator NCOA5. Interacts with PELP1, the interaction is enhanced by 17-beta-estradiol; the interaction increases ESR1 transcriptional activity. Interacts with NCOA7; the interaction is ligand-inducible. Interacts with AKAP13, CUEDC2, HEXIM1, KDM5A, MAP1S, SMARD1, and UBE1C. Interacts with MUC1; the interaction is stimulated by 7 beta-estradiol (E2) and enhances ESR1-mediated transcription. Interacts with DNTTIP2, and UIMC1. Interacts with KMT2D/MLL2. Interacts with ATAD2; the interaction is enhanced by estradiol. Interacts with KIF18A and LDB1. Interacts with RLIM (via its C-terminus). Interacts with MACROD1. Interacts with SH2D4A and PLCG. Interacts with SH2D4A; the interaction blocks binding to PLCG and inhibits estrogen-induced cell proliferation. Interacts with DYNLL1. Interacts with CCDC62; the interaction requires estradiol and appears to enhance the transcription of target genes. Interacts with NR2C1; the interaction prevents homodimerization of ESR1 and suppresses its transcriptional activity and cell growth. Interacts with DNAAF4. Interacts with PRMT2. Interacts with RBFOX2. Interacts with EP300; the interaction is estrogen-dependent and enhanced by CITED1. Interacts with CITED1; the interaction is estrogen-dependent. Interacts with FAM120B, FOXL2, PHB2 and SLC30A9. Interacts with coactivators NCOA3 and NCOA6. Interacts with STK3/MST2 only in the presence of SAV1 and vice-versa. Binds to CSNK1D. Interacts with NCOA2; NCOA2 can interact with ESR1 AF-1 and AF-2 domains simultaneously and mediate their transcriptional synergy. Interacts with DDX5. Interacts with NCOA1; the interaction seems to require a self-association of N-terminal and C-terminal regions. Interacts with ZNF366, DDX17, NFKB1, RELA, SP1 and SP3. Interacts with NRIP1. Interacts with GPER1; the interaction occurs in an estrogen-dependent manner. Interacts with CLOCK and the interaction is stimulated by estrogen. Interacts with TRIP4 (ufmylated); estrogen dependent. Interacts with LMTK3; the interaction phosphorylates ESR1 (in vitro) and protects it against proteasomal degradation. Interacts with CCAR2 (via N-terminus) in a ligand-independent manner. Interacts with ZFHX3. Interacts with SFR1 in a ligand-dependent and -independent manner. Interacts with DCAF13, LATS1 and DCAF1; regulates ESR1 ubiquitination and ubiquitin-mediated proteasomal degradation. Interacts (via DNA-binding domain) with POU4F2 (C-terminus); this interaction increases the estrogen receptor ESR1 transcriptional activity in a DNA- and ligand 17-beta-estradiol-independent manner. Interacts with ESRRB isoform 1. Interacts with UBE3A and WBP2. Interacts with GTF2B. Interacts with RBM39. In the absence of hormonal ligand, interacts with TACC1. Interacts with PI3KR1 or PI3KR2 and PTK2/FAK1. Interacts with SRC. Interacts with BAG1; the interaction is promoted in the absence of estradiol (17-beta-estradiol/E2). Interacts with and ubiquitinated by STUB1; the interaction is promoted in the absence of estradiol (17-beta-estradiol/E2). Interacts with NEDD8. Post-translationally, glycosylated; contains N-acetylglucosamine, probably O-linked. In terms of processing, ubiquitinated; regulated by LATS1 via DCAF1 it leads to ESR1 proteasomal degradation. Deubiquitinated by OTUB1. Ubiquitinated by STUB1/CHIP; in the CA1 hippocampal region following loss of endogenous circulating estradiol (17-beta-estradiol/E2). Ubiquitinated by UBR5, leading to its degradation: UBR5 specifically recognizes and binds ligand-bound ESR1 when it is not associated with coactivators (NCOAs). In presence of NCOAs, the UBR5-degron is not accessible, preventing its ubiquitination and degradation. Phosphorylated by cyclin A/CDK2 and CK1. Phosphorylation probably enhances transcriptional activity. Dephosphorylation at Ser-119 by PPP5C inhibits its transactivation activity. Phosphorylated by LMTK3 (in vitro). Post-translationally, palmitoylated at Cys-448 by ZDHHC7 and ZDHHC21. Palmitoylation is required for plasma membrane targeting and for rapid intracellular signaling via ERK and AKT kinases and cAMP generation, but not for signaling mediated by the nuclear hormone receptor. In terms of processing, dimethylated by PRMT1 at Arg-261. The methylation may favor cytoplasmic localization. Demethylated by JMJD6 at Arg-261.

Its subcellular location is the nucleus. It is found in the cytoplasm. The protein resides in the golgi apparatus. The protein localises to the cell membrane. Functionally, nuclear hormone receptor. The steroid hormones and their receptors are involved in the regulation of eukaryotic gene expression and affect cellular proliferation and differentiation in target tissues. Ligand-dependent nuclear transactivation involves either direct homodimer binding to a palindromic estrogen response element (ERE) sequence or association with other DNA-binding transcription factors, such as AP-1/c-Jun, c-Fos, ATF-2, Sp1 and Sp3, to mediate ERE-independent signaling. Ligand binding induces a conformational change allowing subsequent or combinatorial association with multiprotein coactivator complexes through LXXLL motifs of their respective components. Mutual transrepression occurs between the estrogen receptor (ER) and NF-kappa-B in a cell-type specific manner. Decreases NF-kappa-B DNA-binding activity and inhibits NF-kappa-B-mediated transcription from the IL6 promoter and displace RELA/p65 and associated coregulators from the promoter. Recruited to the NF-kappa-B response element of the CCL2 and IL8 promoters and can displace CREBBP. Present with NF-kappa-B components RELA/p65 and NFKB1/p50 on ERE sequences. Can also act synergistically with NF-kappa-B to activate transcription involving respective recruitment adjacent response elements; the function involves CREBBP. Can activate the transcriptional activity of TFF1. Also mediates membrane-initiated estrogen signaling involving various kinase cascades. Essential for MTA1-mediated transcriptional regulation of BRCA1 and BCAS3. Maintains neuronal survival in response to ischemic reperfusion injury when in the presence of circulating estradiol (17-beta-estradiol/E2). This chain is Estrogen receptor (ESR1), found in Bos taurus (Bovine).